Reading from the N-terminus, the 86-residue chain is Gas vesicle protein A1 (86 aa).

Belongs to the gas vesicle GvpA family. The gas vesicle shell is 2 nm thick and consists of a single layer of this protein. It forms helical ribs nearly perpendicular to the long axis of the vesicle.

The protein resides in the gas vesicle shell. Functionally, gas vesicles are hollow, gas filled proteinaceous nanostructures found in some microorganisms. During planktonic growth they allow positioning of the organism at a favorable depth for light or nutrient acquisition. GvpA forms the protein shell. Its function is as follows. It is not clear if the 2 type A proteins in this organism are functionally redundant. When the full gvp locus (gvpA1-gvpP-gvpQ-gvpA2-gvpR-gvpN-gvpF-gvpG-gvpL-gvpS-gvpK-gvpJ-gvpT-gvpU, called pNL26) is expressed in E.coli gas vesicles are made. The chain is Gas vesicle protein A1 from Priestia megaterium (Bacillus megaterium).